A 181-amino-acid polypeptide reads, in one-letter code: Caveolin-1 (181 aa).

At 1–107 (MTGGLRDGEK…TKYWCYRLLT (107 aa)) the chain is on the cytoplasmic side. Positions 108 to 128 (ALVGIPLALIWGIFFAILSFI) form an intramembrane region, helical. The Cytoplasmic segment spans residues 129–181 (HIWAVVPCVKSYLIEIHCISRVYSICVHTFCDPLFEAMGKCLGGVRIRTSKEV). S-palmitoyl cysteine attachment occurs at residues cysteine 136, cysteine 146, and cysteine 159.

Belongs to the caveolin family. Homooligomer.

The protein localises to the golgi apparatus membrane. Its subcellular location is the cell membrane. The protein resides in the membrane. It is found in the caveola. It localises to the membrane raft. In terms of biological role, may act as a positive regulator of T-cell coactivation. May act as a scaffolding protein within caveolar membranes. Interacts directly with G-protein alpha subunits and can functionally regulate their activity. This Takifugu rubripes (Japanese pufferfish) protein is Caveolin-1 (cav1).